Consider the following 259-residue polypeptide: Thiazole synthase (259 aa).

The active-site Schiff-base intermediate with DXP is lysine 95. Residues glycine 156, alanine 182–glycine 183, and asparagine 204–threonine 205 contribute to the 1-deoxy-D-xylulose 5-phosphate site.

Belongs to the ThiG family. As to quaternary structure, homotetramer. Forms heterodimers with either ThiH or ThiS.

It localises to the cytoplasm. It catalyses the reaction [ThiS sulfur-carrier protein]-C-terminal-Gly-aminoethanethioate + 2-iminoacetate + 1-deoxy-D-xylulose 5-phosphate = [ThiS sulfur-carrier protein]-C-terminal Gly-Gly + 2-[(2R,5Z)-2-carboxy-4-methylthiazol-5(2H)-ylidene]ethyl phosphate + 2 H2O + H(+). Its pathway is cofactor biosynthesis; thiamine diphosphate biosynthesis. Its function is as follows. Catalyzes the rearrangement of 1-deoxy-D-xylulose 5-phosphate (DXP) to produce the thiazole phosphate moiety of thiamine. Sulfur is provided by the thiocarboxylate moiety of the carrier protein ThiS. In vitro, sulfur can be provided by H(2)S. The sequence is that of Thiazole synthase from Serratia proteamaculans (strain 568).